A 472-amino-acid polypeptide reads, in one-letter code: Ribosomal protein uS12 methylthiotransferase RimO (472 aa).

The 114-residue stretch at 1–114 (MKFHIITLGC…IGDVVDTLQR (114 aa)) folds into the MTTase N-terminal domain. The [4Fe-4S] cluster site is built by Cys-10, Cys-46, Cys-78, Cys-171, Cys-175, and Cys-178. The Radical SAM core domain maps to 157–388 (RITGPSAYLK…MRLQQGISRQ (232 aa)). One can recognise a TRAM domain in the interval 391–460 (RRWVGRVIRV…DYDLWGEMVE (70 aa)).

This sequence belongs to the methylthiotransferase family. RimO subfamily. The cofactor is [4Fe-4S] cluster.

It localises to the cytoplasm. It carries out the reaction L-aspartate(89)-[ribosomal protein uS12]-hydrogen + (sulfur carrier)-SH + AH2 + 2 S-adenosyl-L-methionine = 3-methylsulfanyl-L-aspartate(89)-[ribosomal protein uS12]-hydrogen + (sulfur carrier)-H + 5'-deoxyadenosine + L-methionine + A + S-adenosyl-L-homocysteine + 2 H(+). Its function is as follows. Catalyzes the methylthiolation of an aspartic acid residue of ribosomal protein uS12. This chain is Ribosomal protein uS12 methylthiotransferase RimO, found in Roseiflexus sp. (strain RS-1).